The following is a 178-amino-acid chain: Fucolectin-1 (178 aa).

Residues 1-20 (MKVKTIMLLFQILAISTIKS) form the signal peptide. The interval 29–178 (QENVAVRGKA…VEVNALLPVN (150 aa)) is F5/8 type C-like. Ca(2+)-binding residues include aspartate 59, asparagine 61, and serine 70. Cystine bridges form between cysteine 71–cysteine 167, cysteine 103–cysteine 104, and cysteine 129–cysteine 145. Alpha-L-fucose-binding residues include histidine 73 and arginine 100. The Cell attachment site motif lies at 100-102 (RGD). Arginine 107 contacts alpha-L-fucose. Ca(2+) is bound by residues cysteine 167 and glutamate 168.

The protein belongs to the fucolectin family. In terms of assembly, homotrimer. In terms of tissue distribution, parenchymal hepatocytes.

The protein resides in the secreted. Its subcellular location is the extracellular space. In terms of biological role, acts as a defensive agent. Recognizes blood group fucosylated oligosaccharides including A, B, H and Lewis B-type antigens. Does not recognize Lewis A antigen and has low affinity for monovalent haptens. This Anguilla japonica (Japanese eel) protein is Fucolectin-1.